We begin with the raw amino-acid sequence, 390 residues long: Olfactomedin-like protein 3A (390 aa).

An N-terminal signal peptide occupies residues 1 to 17 (MRALQLLVLVLSGLVGA). Residues 18–91 (QQQALMDYLE…RVDRVEREMD (74 aa)) are a coiled coil. The 257-residue stretch at 130-386 (DCSDMISSIK…QILYKLQLKK (257 aa)) folds into the Olfactomedin-like domain. Cysteine 131 and cysteine 313 are disulfide-bonded. Asparagine 169 carries N-linked (GlcNAc...) asparagine glycosylation.

This sequence belongs to the OLFML3 family.

The protein localises to the secreted. Its function is as follows. Secreted scaffold protein that plays an essential role in dorsoventral patterning during early development. Stabilizes axial formation by restricting chordin (CHRD) activity on the dorsal side. Acts by facilitating the association between the tolloid proteases and their substrate chordin (CHRD), leading to enhance chordin (CHRD) degradation. The sequence is that of Olfactomedin-like protein 3A (olfml3a) from Danio rerio (Zebrafish).